A 250-amino-acid polypeptide reads, in one-letter code: tRNA (guanine-N(1)-)-methyltransferase (250 aa).

S-adenosyl-L-methionine is bound by residues Gly113 and 133-138 (VGDYVL).

This sequence belongs to the RNA methyltransferase TrmD family. In terms of assembly, homodimer.

It is found in the cytoplasm. It catalyses the reaction guanosine(37) in tRNA + S-adenosyl-L-methionine = N(1)-methylguanosine(37) in tRNA + S-adenosyl-L-homocysteine + H(+). Functionally, specifically methylates guanosine-37 in various tRNAs. This is tRNA (guanine-N(1)-)-methyltransferase from Proteus mirabilis (strain HI4320).